A 280-amino-acid chain; its full sequence is Probable endonuclease 4 (280 aa).

The Zn(2+) site is built by histidine 69, histidine 109, glutamate 145, aspartate 179, histidine 182, histidine 216, aspartate 229, histidine 231, and glutamate 261.

The protein belongs to the AP endonuclease 2 family. The cofactor is Zn(2+).

It catalyses the reaction Endonucleolytic cleavage to 5'-phosphooligonucleotide end-products.. Endonuclease IV plays a role in DNA repair. It cleaves phosphodiester bonds at apurinic or apyrimidinic (AP) sites, generating a 3'-hydroxyl group and a 5'-terminal sugar phosphate. The protein is Probable endonuclease 4 of Pelodictyon phaeoclathratiforme (strain DSM 5477 / BU-1).